The following is a 305-amino-acid chain: Nucleotide-binding protein Mjls_2437 (305 aa).

28 to 35 provides a ligand contact to ATP; the sequence is GLSGAGRG. 79–82 lines the GTP pocket; the sequence is DVRS.

The protein belongs to the RapZ-like family.

Displays ATPase and GTPase activities. The polypeptide is Nucleotide-binding protein Mjls_2437 (Mycobacterium sp. (strain JLS)).